Consider the following 358-residue polypeptide: 3-isopropylmalate dehydrogenase (358 aa).

An NAD(+)-binding site is contributed by 75 to 88 (GPKWETLPPEKQPE). 4 residues coordinate substrate: Arg-96, Arg-106, Arg-135, and Asp-225. Mg(2+) is bound by residues Asp-225, Asp-249, and Asp-253. 283–295 (GSAPDIAGKGVAN) is an NAD(+) binding site.

The protein belongs to the isocitrate and isopropylmalate dehydrogenases family. LeuB type 1 subfamily. In terms of assembly, homodimer. Mg(2+) serves as cofactor. Requires Mn(2+) as cofactor.

It is found in the cytoplasm. It catalyses the reaction (2R,3S)-3-isopropylmalate + NAD(+) = 4-methyl-2-oxopentanoate + CO2 + NADH. The protein operates within amino-acid biosynthesis; L-leucine biosynthesis; L-leucine from 3-methyl-2-oxobutanoate: step 3/4. Its function is as follows. Catalyzes the oxidation of 3-carboxy-2-hydroxy-4-methylpentanoate (3-isopropylmalate) to 3-carboxy-4-methyl-2-oxopentanoate. The product decarboxylates to 4-methyl-2 oxopentanoate. This is 3-isopropylmalate dehydrogenase from Leptospira interrogans serogroup Icterohaemorrhagiae serovar copenhageni (strain Fiocruz L1-130).